The primary structure comprises 591 residues: Aspartate--tRNA(Asp/Asn) ligase (591 aa).

E175 serves as a coordination point for L-aspartate. The segment at 199–202 is aspartate; the sequence is QQFK. Residues R221 and H453 each contribute to the L-aspartate site. Residue 221–223 participates in ATP binding; it reads RDE. Residue E486 coordinates ATP. R493 serves as a coordination point for L-aspartate. 538–541 serves as a coordination point for ATP; it reads GIDR.

Belongs to the class-II aminoacyl-tRNA synthetase family. Type 1 subfamily. As to quaternary structure, homodimer.

Its subcellular location is the cytoplasm. The enzyme catalyses tRNA(Asx) + L-aspartate + ATP = L-aspartyl-tRNA(Asx) + AMP + diphosphate. Its function is as follows. Aspartyl-tRNA synthetase with relaxed tRNA specificity since it is able to aspartylate not only its cognate tRNA(Asp) but also tRNA(Asn). Reaction proceeds in two steps: L-aspartate is first activated by ATP to form Asp-AMP and then transferred to the acceptor end of tRNA(Asp/Asn). The protein is Aspartate--tRNA(Asp/Asn) ligase of Paracoccus denitrificans (strain Pd 1222).